The primary structure comprises 208 residues: NAD(P)H-hydrate epimerase (208 aa).

The 198-residue stretch at 11-208 (MRAKDQFTIN…VIVADDMGTY (198 aa)) folds into the YjeF N-terminal domain. 59-63 (NNGGD) serves as a coordination point for (6S)-NADPHX. Residues N60 and D122 each contribute to the K(+) site. (6S)-NADPHX is bound by residues 126–132 (GIGIDRP), Y137, and D155. S158 serves as a coordination point for K(+).

The protein belongs to the NnrE/AIBP family. Requires K(+) as cofactor.

The catalysed reaction is (6R)-NADHX = (6S)-NADHX. It catalyses the reaction (6R)-NADPHX = (6S)-NADPHX. Its function is as follows. Catalyzes the epimerization of the S- and R-forms of NAD(P)HX, a damaged form of NAD(P)H that is a result of enzymatic or heat-dependent hydration. This is a prerequisite for the S-specific NAD(P)H-hydrate dehydratase to allow the repair of both epimers of NAD(P)HX. The protein is NAD(P)H-hydrate epimerase of Limosilactobacillus fermentum (strain NBRC 3956 / LMG 18251) (Lactobacillus fermentum).